Here is a 69-residue protein sequence, read N- to C-terminus: Nodulin-3 (69 aa).

The signal sequence occupies residues 1–24 (MAKILKFVFAIILFFSLFLLSMEA).

In Pisum sativum (Garden pea), this protein is Nodulin-3 (ENOD3).